An 882-amino-acid polypeptide reads, in one-letter code: Translation initiation factor IF-2 (882 aa).

Composition is skewed to polar residues over residues 38–56 (NDSNSFVDLHNNSNKAEYS), 97–124 (GGYSQNRDNRTGGYSQNRDNRTGGYSQN), and 140–192 (GGYS…NRDS). Disordered regions lie at residues 38–192 (NDSN…NRDS) and 236–274 (STPAADSENSKELNRKLGEKKKQQQESQKSYKRKKAETE). A compositionally biased stretch (basic and acidic residues) spans 243-259 (ENSKELNRKLGEKKKQQ). Residues 380–553 (EKPPVITIMG…DMMLLKANPS (174 aa)) enclose the tr-type G domain. Residues 389–396 (GHVDHGKT) form a G1 region. Position 389-396 (389-396 (GHVDHGKT)) interacts with GTP. The tract at residues 414–418 (GITQH) is G2. The interval 435 to 438 (DTPG) is G3. GTP-binding positions include 435 to 439 (DTPGH) and 489 to 492 (NKID). The segment at 489 to 492 (NKID) is G4. The G5 stretch occupies residues 525–527 (SAL).

It belongs to the TRAFAC class translation factor GTPase superfamily. Classic translation factor GTPase family. IF-2 subfamily.

The protein localises to the cytoplasm. One of the essential components for the initiation of protein synthesis. Protects formylmethionyl-tRNA from spontaneous hydrolysis and promotes its binding to the 30S ribosomal subunits. Also involved in the hydrolysis of GTP during the formation of the 70S ribosomal complex. The sequence is that of Translation initiation factor IF-2 (infB) from Borreliella burgdorferi (strain ATCC 35210 / DSM 4680 / CIP 102532 / B31) (Borrelia burgdorferi).